The primary structure comprises 308 residues: Glutamyl-Q tRNA(Asp) synthetase (308 aa).

L-glutamate is bound by residues 19–23 (RFAPS) and Glu-55. The short motif at 22–32 (PSPSGELHFGS) is the 'HIGH' region element. Residues Cys-111, Cys-113, Tyr-125, and Cys-129 each coordinate Zn(2+). L-glutamate is bound by residues Tyr-182 and Arg-200. Positions 238 to 242 (KLSKQ) match the 'KMSKS' region motif. Position 241 (Lys-241) interacts with ATP.

It belongs to the class-I aminoacyl-tRNA synthetase family. GluQ subfamily. The cofactor is Zn(2+).

Its function is as follows. Catalyzes the tRNA-independent activation of glutamate in presence of ATP and the subsequent transfer of glutamate onto a tRNA(Asp). Glutamate is transferred on the 2-amino-5-(4,5-dihydroxy-2-cyclopenten-1-yl) moiety of the queuosine in the wobble position of the QUC anticodon. The polypeptide is Glutamyl-Q tRNA(Asp) synthetase (Escherichia coli O6:H1 (strain CFT073 / ATCC 700928 / UPEC)).